An 892-amino-acid polypeptide reads, in one-letter code: von Willebrand factor A domain-containing protein 7 (892 aa).

The first 27 residues, 1–27 (MLPVEVPLSQLGPPVLLLQLLLPPTSA), serve as a signal peptide directing secretion. Residue Asn54 is glycosylated (N-linked (GlcNAc...) asparagine). Positions 231-272 (YFGTNPPKPPGKCSHGGRFDQSSSQPPRGGINKDSTSPSFSP) are disordered. In terms of domain architecture, VWFA spans 313-495 (ASSLSFVLDT…HIRDVAAVVG (183 aa)).

It localises to the secreted. The polypeptide is von Willebrand factor A domain-containing protein 7 (Vwa7) (Rattus norvegicus (Rat)).